The following is a 790-amino-acid chain: LPS-assembly protein LptD (790 aa).

A signal peptide spans 1 to 20 (MRMLRWLILSAFSVAGAVQA).

This sequence belongs to the LptD family. As to quaternary structure, component of the lipopolysaccharide transport and assembly complex. Interacts with LptE and LptA.

The protein resides in the cell outer membrane. Together with LptE, is involved in the assembly of lipopolysaccharide (LPS) at the surface of the outer membrane. The chain is LPS-assembly protein LptD from Bordetella bronchiseptica (strain ATCC BAA-588 / NCTC 13252 / RB50) (Alcaligenes bronchisepticus).